Reading from the N-terminus, the 127-residue chain is Protein HI_1253 (127 aa).

Helical transmembrane passes span 13–33 (VIML…LLVI), 61–81 (LIVS…WWLV), 82–102 (AKFA…SKKV), and 107–127 (SIFF…AYLK).

The protein belongs to the SirB2 family.

It localises to the cell inner membrane. The chain is Protein HI_1253 from Haemophilus influenzae (strain ATCC 51907 / DSM 11121 / KW20 / Rd).